The following is a 68-amino-acid chain: UPF0434 protein H16_A0605 (68 aa).

It belongs to the UPF0434 family.

In Cupriavidus necator (strain ATCC 17699 / DSM 428 / KCTC 22496 / NCIMB 10442 / H16 / Stanier 337) (Ralstonia eutropha), this protein is UPF0434 protein H16_A0605.